Here is a 385-residue protein sequence, read N- to C-terminus: 3-hydroxyisobutyryl-CoA hydrolase, mitochondrial (385 aa).

Substrate contacts are provided by Glu120, Gly145, Glu168, and Asp176.

The protein belongs to the enoyl-CoA hydratase/isomerase family.

The protein resides in the mitochondrion. The catalysed reaction is 3-hydroxy-2-methylpropanoyl-CoA + H2O = 3-hydroxy-2-methylpropanoate + CoA + H(+). The protein operates within amino-acid degradation; L-valine degradation. Hydrolyzes 3-hydroxyisobutyryl-CoA (HIBYL-CoA), a saline catabolite. Has high activity toward isobutyryl-CoA. Could be an isobutyryl-CoA dehydrogenase that functions in valine catabolism. Also hydrolyzes 3-hydroxypropanoyl-CoA. This is 3-hydroxyisobutyryl-CoA hydrolase, mitochondrial (HIBCH) from Gallus gallus (Chicken).